The following is a 103-amino-acid chain: Large ribosomal subunit protein uL23c (103 aa).

The protein belongs to the universal ribosomal protein uL23 family. As to quaternary structure, part of the 50S ribosomal subunit.

The protein localises to the plastid. The protein resides in the chloroplast. Binds to 23S rRNA. The protein is Large ribosomal subunit protein uL23c (rpl23) of Gracilaria tenuistipitata var. liui (Red alga).